The sequence spans 465 residues: ATP-dependent RNA helicase ddx19 (465 aa).

The span at 1–20 (MSEKETNTTSTENKEKEKQE) shows a compositional bias: basic and acidic residues. The interval 1–45 (MSEKETNTTSTENKEKEKQEQTNTNSTTESTNNQVDEEYERPGRS) is disordered. Low complexity predominate over residues 21–34 (QTNTNSTTESTNNQ). Positions 70 to 98 (KTFEELGLKPELLKGVYAMGYNKPSKIQE) match the Q motif motif. In terms of domain architecture, Helicase ATP-binding spans 102–268 (PIIIQSPNNL…KKIVQDPYTS (167 aa)). Position 115–122 (115–122 (SQSGTGKT)) interacts with ATP. The DEAD box motif lies at 215 to 218 (DEAD). A Helicase C-terminal domain is found at 297 to 449 (ILSDIYGFIS…ELKSSEIESL (153 aa)).

It belongs to the DEAD box helicase family. DDX19/DBP5 subfamily.

The catalysed reaction is ATP + H2O = ADP + phosphate + H(+). In terms of biological role, ATP-binding RNA helicase required for normal differentiation and development. The polypeptide is ATP-dependent RNA helicase ddx19 (helC) (Dictyostelium discoideum (Social amoeba)).